Reading from the N-terminus, the 516-residue chain is MQVTSVGHAGFLIQTQAGSILCDPWVNPAYFASWFPFPDNSGLDWGALGECDYLYVSHLHKDHFDAENLRAHVNKDAVVLLPDFPVPDLRNELQKLGFHRFFETTDSVKHRLRGPNGDLDVMIIALRAPADGPIGDSALVVADGETTAFNMNDARPVDLDVLASEFGHIDVHMLQYSGAIWYPMVYDMPARAKDAFGAQKRQRQMDRARQYIAQVGATWVVPSAGPPCFLAPELRHLNDDGSDPANIFPDQMVFLDQMRAHGQDGGLLMIPGSTADFTGTTLNSLRHPLPAEQVEAIFTTDKAAYIADYADRMAPVLAAQKAGWAAAAGEPLLQPLRTLFEPIMLQSNEICDGIGYPVELAIGPETIVLDFPKRAVREPIPDERFRYGFAIAPELVRTVLRDNEPDWVNTIFLSTRFRAWRVGGYNEYLYTFFKCLTDERIAYADGWFAEAHDDSSSITLNGWEIQRRCPHLKADLSKFGVVEGNTLTCNLHGWQWRLDDGRCLTARGHQLRSSRP.

The Rieske domain occupies 429–516 (LYTFFKCLTD…RGHQLRSSRP (88 aa)). The [2Fe-2S] cluster site is built by Cys469, His471, Cys489, and His492.

[2Fe-2S] cluster serves as cofactor.

The sequence is that of Putative Rieske 2Fe-2S iron-sulfur protein MT3926 from Mycobacterium tuberculosis (strain CDC 1551 / Oshkosh).